Consider the following 96-residue polypeptide: Large ribosomal subunit protein bL27 (96 aa).

Positions 12–33 (HKGGGSSANGRNSAGRRLGAKA) are disordered. The span at 19–28 (ANGRNSAGRR) shows a compositional bias: low complexity.

The protein belongs to the bacterial ribosomal protein bL27 family.

This Lactobacillus helveticus (strain DPC 4571) protein is Large ribosomal subunit protein bL27.